The chain runs to 436 residues: 3-ketoacyl-CoA thiolase (436 aa).

The active-site Acyl-thioester intermediate is the cysteine 99. Residues histidine 392 and cysteine 422 each act as proton acceptor in the active site.

It belongs to the thiolase-like superfamily. Thiolase family. In terms of assembly, heterotetramer of two alpha chains (FadJ) and two beta chains (FadI).

The protein localises to the cytoplasm. It carries out the reaction an acyl-CoA + acetyl-CoA = a 3-oxoacyl-CoA + CoA. The protein operates within lipid metabolism; fatty acid beta-oxidation. In terms of biological role, catalyzes the final step of fatty acid oxidation in which acetyl-CoA is released and the CoA ester of a fatty acid two carbons shorter is formed. This is 3-ketoacyl-CoA thiolase from Salmonella paratyphi A (strain AKU_12601).